The following is a 134-amino-acid chain: NADH-quinone oxidoreductase subunit A (134 aa).

Transmembrane regions (helical) follow at residues 12–32 (FAIY…LAAL), 64–84 (FYLV…LFAW), and 93–113 (WVGF…LVYL).

The protein belongs to the complex I subunit 3 family. As to quaternary structure, NDH-1 is composed of 13 different subunits. Subunits NuoA, H, J, K, L, M, N constitute the membrane sector of the complex.

Its subcellular location is the cell inner membrane. It catalyses the reaction a quinone + NADH + 5 H(+)(in) = a quinol + NAD(+) + 4 H(+)(out). NDH-1 shuttles electrons from NADH, via FMN and iron-sulfur (Fe-S) centers, to quinones in the respiratory chain. The immediate electron acceptor for the enzyme in this species is believed to be ubiquinone. Couples the redox reaction to proton translocation (for every two electrons transferred, four hydrogen ions are translocated across the cytoplasmic membrane), and thus conserves the redox energy in a proton gradient. The chain is NADH-quinone oxidoreductase subunit A from Shewanella oneidensis (strain ATCC 700550 / JCM 31522 / CIP 106686 / LMG 19005 / NCIMB 14063 / MR-1).